Reading from the N-terminus, the 215-residue chain is Small ribosomal subunit protein uS5 (215 aa).

The segment covering 1 to 11 has biased composition (polar residues); the sequence is MTDSSPQSNPN. Positions 1–61 are disordered; sequence MTDSSPQSNP…GQDRDSEWQE (61 aa). The segment covering 12–28 has biased composition (low complexity); sequence AVPGAADVPAAAQGQQQ. A compositionally biased stretch (basic and acidic residues) spans 39–61; it reads RGDRRGDRRGGRRGQDRDSEWQE. Positions 59–122 constitute an S5 DRBM domain; sequence WQERVVQIRR…ADGKKHLVKV (64 aa).

Belongs to the universal ribosomal protein uS5 family. Part of the 30S ribosomal subunit. Contacts proteins S4 and S8.

Its function is as follows. With S4 and S12 plays an important role in translational accuracy. Functionally, located at the back of the 30S subunit body where it stabilizes the conformation of the head with respect to the body. The sequence is that of Small ribosomal subunit protein uS5 from Synechococcus sp. (strain CC9902).